The chain runs to 220 residues: Large ribosomal subunit protein uL3 (220 aa).

Belongs to the universal ribosomal protein uL3 family. In terms of assembly, part of the 50S ribosomal subunit. Forms a cluster with proteins L14 and L19.

One of the primary rRNA binding proteins, it binds directly near the 3'-end of the 23S rRNA, where it nucleates assembly of the 50S subunit. This Staphylococcus haemolyticus (strain JCSC1435) protein is Large ribosomal subunit protein uL3.